Reading from the N-terminus, the 1127-residue chain is Disease resistance protein RPS6 (1127 aa).

M1 bears the N-acetylmethionine mark. The TIR domain occupies 12 to 176 (WSYHVFPSFS…EIANDILGKM (165 aa)). E87 is an active-site residue. The region spanning 191-452 (EDHITKMSSL…HIACIFNGEK (262 aa)) is the NB-ARC domain. LRR repeat units follow at residues 197-221 (MSSLLHLESEEVRMVGIWGPSGIGK), 540-563 (IDETDELHIHESSFKGMHNLLFLK), 587-609 (PSRLRLLRFDRYPSKCLPSNFHP), 610-632 (ENLVKLQMQQSKLEKLWDGVHSL), 633-656 (AGLRNMDLRGSRNLKEIPDLSMAT), 658-679 (LETLKLSSCSSLVELPSSIQYL), 680-704 (NKLNDLDMSYCDHLETIPSGVNLKS), 766-790 (SPTLTRLTFSNNPSFVEVPSSIQNL), 791-813 (YQLEHLEIMNCRNLVTLPTGINL), 814-834 (DSLISLDLSHCSQLKTFPDIS), and 835-857 (TNISDLNLSYTAIEEVPLSIEKL).

Interacts with EDS1. In terms of tissue distribution, ubiquitous.

It carries out the reaction NAD(+) + H2O = ADP-D-ribose + nicotinamide + H(+). In terms of biological role, disease resistance (R) protein that specifically recognizes the hopA1 type III effector avirulence protein from Pseudomonas syringae. Resistance proteins guard the plant against pathogens that contain an appropriate avirulence protein via an indirect interaction with this avirulence protein. That triggers a defense system including the hypersensitive response, which restricts the pathogen growth. This chain is Disease resistance protein RPS6 (RPS6), found in Arabidopsis thaliana (Mouse-ear cress).